A 219-amino-acid polypeptide reads, in one-letter code: Large ribosomal subunit protein uL3 (219 aa).

Residues 133 to 145 (GRASHGNSRSHNV) are compositionally biased toward polar residues. The disordered stretch occupies residues 133 to 153 (GRASHGNSRSHNVPGSIGMAQ). The residue at position 153 (Gln153) is an N5-methylglutamine.

The protein belongs to the universal ribosomal protein uL3 family. In terms of assembly, part of the 50S ribosomal subunit. Forms a cluster with proteins L14 and L19. Methylated by PrmB.

In terms of biological role, one of the primary rRNA binding proteins, it binds directly near the 3'-end of the 23S rRNA, where it nucleates assembly of the 50S subunit. The protein is Large ribosomal subunit protein uL3 of Paraburkholderia phymatum (strain DSM 17167 / CIP 108236 / LMG 21445 / STM815) (Burkholderia phymatum).